Here is a 453-residue protein sequence, read N- to C-terminus: Na(+)/H(+) antiporter NhaA 2 (453 aa).

12 helical membrane-spanning segments follow: residues 23 to 43, 74 to 94, 111 to 131, 139 to 159, 168 to 188, 191 to 211, 214 to 234, 235 to 255, 316 to 336, 345 to 365, 386 to 406, and 419 to 439; these read FLHIEAVSGIVLLIAAVAALI, LHFWINDGLMTIFFLVVGMEI, LPMAAAVGGVAVPALLYLSFG, GWAVPTATDIAFAVGVLALLG, VFLLALAIIDDIIAVLIIAFF, GGLDYTGFGVALIGLLMVIGL, IGVGSAYAYVLPGAIVWLGIL, LTGAHPTLAGVVLGLMTPVTA, VAFGIMPVFALANAGVSLSGV, WVMIAVAVALVAGKPLGIVSV, IVLVGLLAGIGFTMSIFIANL, and LGVLSASLIAAVLGLTWGVWS.

Belongs to the NhaA Na(+)/H(+) (TC 2.A.33) antiporter family.

Its subcellular location is the cell inner membrane. It catalyses the reaction Na(+)(in) + 2 H(+)(out) = Na(+)(out) + 2 H(+)(in). Its function is as follows. Na(+)/H(+) antiporter that extrudes sodium in exchange for external protons. The chain is Na(+)/H(+) antiporter NhaA 2 from Pseudomonas putida (strain ATCC 700007 / DSM 6899 / JCM 31910 / BCRC 17059 / LMG 24140 / F1).